The following is a 411-amino-acid chain: [Pyruvate dehydrogenase (acetyl-transferring)] kinase isozyme 4, mitochondrial (411 aa).

The 231-residue stretch at 138–368 (IIEYKDACTV…DAIIYLKALS (231 aa)) folds into the Histidine kinase domain. Residues 254 to 261 (ELFKNAMR), Asp-293, 312 to 313 (ST), and 329 to 334 (GFGYGL) each bind ATP.

It belongs to the PDK/BCKDK protein kinase family. As to quaternary structure, homodimer. Interacts with the pyruvate dehydrogenase complex subunit DLAT, and is part of the multimeric pyruvate dehydrogenase complex that contains multiple copies of pyruvate dehydrogenase (E1), dihydrolipoamide acetyltransferase (DLAT, E2) and lipoamide dehydrogenase (DLD, E3). Ubiquitous; highest levels of expression in heart and skeletal muscle.

It is found in the mitochondrion matrix. The enzyme catalyses L-seryl-[pyruvate dehydrogenase E1 alpha subunit] + ATP = O-phospho-L-seryl-[pyruvate dehydrogenase E1 alpha subunit] + ADP + H(+). Kinase that plays a key role in regulation of glucose and fatty acid metabolism and homeostasis via phosphorylation of the pyruvate dehydrogenase subunits PDHA1 and PDHA2. This inhibits pyruvate dehydrogenase activity, and thereby regulates metabolite flux through the tricarboxylic acid cycle, down-regulates aerobic respiration and inhibits the formation of acetyl-coenzyme A from pyruvate. Inhibition of pyruvate dehydrogenase decreases glucose utilization and increases fat metabolism in response to prolonged fasting and starvation. Plays an important role in maintaining normal blood glucose levels under starvation, and is involved in the insulin signaling cascade. Via its regulation of pyruvate dehydrogenase activity, plays an important role in maintaining normal blood pH and in preventing the accumulation of ketone bodies under starvation. In the fed state, mediates cellular responses to glucose levels and to a high-fat diet. Regulates both fatty acid oxidation and de novo fatty acid biosynthesis. Plays a role in the generation of reactive oxygen species. Protects detached epithelial cells against anoikis. Plays a role in cell proliferation via its role in regulating carbohydrate and fatty acid metabolism. The protein is [Pyruvate dehydrogenase (acetyl-transferring)] kinase isozyme 4, mitochondrial (PDK4) of Homo sapiens (Human).